The following is a 231-amino-acid chain: Ribosomal RNA large subunit methyltransferase E (231 aa).

Residues G76, W78, D99, D115, and D139 each contribute to the S-adenosyl-L-methionine site. The active-site Proton acceptor is the K179.

This sequence belongs to the class I-like SAM-binding methyltransferase superfamily. RNA methyltransferase RlmE family.

The protein resides in the cytoplasm. It catalyses the reaction uridine(2552) in 23S rRNA + S-adenosyl-L-methionine = 2'-O-methyluridine(2552) in 23S rRNA + S-adenosyl-L-homocysteine + H(+). Specifically methylates the uridine in position 2552 of 23S rRNA at the 2'-O position of the ribose in the fully assembled 50S ribosomal subunit. The polypeptide is Ribosomal RNA large subunit methyltransferase E (Bradyrhizobium sp. (strain ORS 278)).